The chain runs to 198 residues: Molybdenum cofactor guanylyltransferase (198 aa).

Residues 14-16 (LAG), Lys27, Asp73, and Asp103 each bind GTP. Asp103 contacts Mg(2+).

The protein belongs to the MobA family. As to quaternary structure, monomer. Mg(2+) is required as a cofactor.

It is found in the cytoplasm. It catalyses the reaction Mo-molybdopterin + GTP + H(+) = Mo-molybdopterin guanine dinucleotide + diphosphate. Its function is as follows. Transfers a GMP moiety from GTP to Mo-molybdopterin (Mo-MPT) cofactor (Moco or molybdenum cofactor) to form Mo-molybdopterin guanine dinucleotide (Mo-MGD) cofactor. This is Molybdenum cofactor guanylyltransferase from Pseudomonas paraeruginosa (strain DSM 24068 / PA7) (Pseudomonas aeruginosa (strain PA7)).